The primary structure comprises 165 residues: Small ribosomal subunit protein uS5 (165 aa).

In terms of domain architecture, S5 DRBM spans 10 to 73 (LKEKVVHINR…EDAKKNIVEV (64 aa)).

This sequence belongs to the universal ribosomal protein uS5 family. As to quaternary structure, part of the 30S ribosomal subunit. Contacts proteins S4 and S8.

In terms of biological role, with S4 and S12 plays an important role in translational accuracy. Functionally, located at the back of the 30S subunit body where it stabilizes the conformation of the head with respect to the body. The sequence is that of Small ribosomal subunit protein uS5 from Clostridium botulinum (strain ATCC 19397 / Type A).